Consider the following 199-residue polypeptide: Prolactin-2 (199 aa).

Intrachain disulfides connect Cys-4–Cys-11, Cys-58–Cys-174, and Cys-191–Cys-199.

Belongs to the somatotropin/prolactin family.

The protein localises to the secreted. This Crocodylus novaeguineae (Crocodile) protein is Prolactin-2.